The chain runs to 188 residues: Elongation factor P (188 aa).

Position 34 is an N6-(3,6-diaminohexanoyl)-5-hydroxylysine (Lys-34).

The protein belongs to the elongation factor P family. May be beta-lysylated on the epsilon-amino group of Lys-34 by the combined action of EpmA and EpmB, and then hydroxylated on the C5 position of the same residue by EpmC (if this protein is present). Lysylation is critical for the stimulatory effect of EF-P on peptide-bond formation. The lysylation moiety may extend toward the peptidyltransferase center and stabilize the terminal 3-CCA end of the tRNA. Hydroxylation of the C5 position on Lys-34 may allow additional potential stabilizing hydrogen-bond interactions with the P-tRNA.

It is found in the cytoplasm. Its pathway is protein biosynthesis; polypeptide chain elongation. Its function is as follows. Involved in peptide bond synthesis. Alleviates ribosome stalling that occurs when 3 or more consecutive Pro residues or the sequence PPG is present in a protein, possibly by augmenting the peptidyl transferase activity of the ribosome. Modification of Lys-34 is required for alleviation. The protein is Elongation factor P of Stenotrophomonas maltophilia (strain R551-3).